Reading from the N-terminus, the 137-residue chain is Large ribosomal subunit protein uL22c (137 aa).

The protein belongs to the universal ribosomal protein uL22 family. Part of the 50S ribosomal subunit.

It localises to the plastid. It is found in the chloroplast. In terms of biological role, this protein binds specifically to 23S rRNA. Its function is as follows. The globular domain of the protein is located near the polypeptide exit tunnel on the outside of the subunit, while an extended beta-hairpin is found that lines the wall of the exit tunnel in the center of the 70S ribosome. This chain is Large ribosomal subunit protein uL22c (rpl22), found in Oenothera argillicola (Appalachian evening primrose).